A 568-amino-acid chain; its full sequence is AP2-like ethylene-responsive transcription factor PLT2 (568 aa).

Low complexity predominate over residues 151 to 171 (ASPAETSADNSSSTTNTSGGA). The interval 151–173 (ASPAETSADNSSSTTNTSGGAIV) is disordered. 2 DNA-binding regions (AP2/ERF) span residues 190–256 (IYRG…TNFP) and 292–350 (MYRG…TNFE). Positions 548-568 (WNSGESAQGSNPGGVFTMWNE) are disordered.

This sequence belongs to the AP2/ERF transcription factor family. AP2 subfamily. In terms of processing, stabilized in root meristems by reactive oxygen species (ROS) mediated oxidative post-translational modification triggered by RGF1 hormone peptide in a RITF1-dependent manner. As to expression, expressed in roots, seedlings, flowers, and siliques. Also detected at low levels in leaves. In roots, specifically detected in the distal root meristem, including the QC. This tissue specificity is regulated by auxin gradient and depends on PIN proteins.

It is found in the nucleus. Probably acts as a transcriptional activator. Binds to the GCC-box pathogenesis-related promoter element. May be involved in the regulation of gene expression by stress factors and by components of stress signal transduction pathways. Master regulator of basal/root fate. Essential for root quiescent center (QC) and columella specification, stem cell activity, as well as for establishment of the stem cell niche during embryogenesis. Modulates the root polar auxin transport by regulating the distribution of PIN genes. Essential role in respecifying pattern and polarity in damaged roots. Direct target of the transcriptional corepressor TPL. Expression levels and patterns regulated post-transcriptionally by root meristem growth factors (RGFs). The protein is AP2-like ethylene-responsive transcription factor PLT2 of Arabidopsis thaliana (Mouse-ear cress).